The following is a 370-amino-acid chain: ADP-ribosylhydrolase ARH3 (370 aa).

Glu47 contributes to the Mg(2+) binding site. Position 70 is a phosphothreonine (Thr70). Mg(2+)-binding residues include Thr82, Asp83, and Asp84. Asp83 lines the substrate pocket. Residues 152–158 (KGSYGNG), His188, Leu241, and Ile277 contribute to the substrate site. 3 residues coordinate Mg(2+): Asp320, Asp322, and Thr323.

This sequence belongs to the ADP-ribosylglycohydrolase family. Monomer. Mg(2+) serves as cofactor. As to expression, ubiquitous.

It is found in the nucleus. Its subcellular location is the cytoplasm. It localises to the chromosome. The protein resides in the mitochondrion matrix. The enzyme catalyses [(1''-&gt;2')-ADP-alpha-D-ribose](n) + H2O = [(1''-&gt;2')-ADP-alpha-D-ribose](n-1) + ADP-D-ribose. It catalyses the reaction 1''-O-acetyl-ADP-alpha-D-ribose + H2O = ADP-D-ribose + acetate + H(+). It carries out the reaction O-(ADP-D-ribosyl)-L-seryl-[protein] + H2O = ADP-D-ribose + L-seryl-[protein]. The catalysed reaction is alpha-NAD(+) + H2O = ADP-D-ribose + nicotinamide + H(+). Its activity is regulated as follows. The protein undergoes a dramatic conformational switch from closed to open states upon substrate-binding, which enables specific substrate recognition for the 1''-O-linkage. The glutamate flap (Glu-47) blocks substrate entrance to Mg(2+) in the unliganded closed state. In presence of substrate, Glu-47 is ejected from the active site: this closed-to-open transition significantly widens the substrate-binding channel and precisely positions the scissile 1''-O-linkage for cleavage while securing tightly 2'- and 3'-hydroxyls of ADP-ribose. Its function is as follows. ADP-ribosylhydrolase that preferentially hydrolyzes the scissile alpha-O-linkage attached to the anomeric C1'' position of ADP-ribose and acts on different substrates, such as proteins ADP-ribosylated on serine and threonine, free poly(ADP-ribose) and O-acetyl-ADP-D-ribose. Specifically acts as a serine mono-ADP-ribosylhydrolase by mediating the removal of mono-ADP-ribose attached to serine residues on proteins, thereby playing a key role in DNA damage response. Serine ADP-ribosylation of proteins constitutes the primary form of ADP-ribosylation of proteins in response to DNA damage. Does not hydrolyze ADP-ribosyl-arginine, -cysteine, -diphthamide, or -asparagine bonds. Also able to degrade protein free poly(ADP-ribose), which is synthesized in response to DNA damage: free poly(ADP-ribose) acts as a potent cell death signal and its degradation by ADPRHL2 protects cells from poly(ADP-ribose)-dependent cell death, a process named parthanatos. Also hydrolyzes free poly(ADP-ribose) in mitochondria. Specifically digests O-acetyl-ADP-D-ribose, a product of deacetylation reactions catalyzed by sirtuins. Specifically degrades 1''-O-acetyl-ADP-D-ribose isomer, rather than 2''-O-acetyl-ADP-D-ribose or 3''-O-acetyl-ADP-D-ribose isomers. This Mus musculus (Mouse) protein is ADP-ribosylhydrolase ARH3 (Adprs).